The sequence spans 305 residues: Oxidoreductase swnR (305 aa).

It belongs to the NmrA-type oxidoreductase family. Isoflavone reductase subfamily.

It carries out the reaction L-pipecolate + O2 = L-1-piperideine-6-carboxylate + H2O2 + H(+). It functions in the pathway mycotoxin biosynthesis. Oxidoreductase; part of the gene cluster that mediates the biosynthesis of swainsonine (SW), a cytotoxic fungal alkaloid and a potential cancer therapy drug. Swainsonine production occurs via a multibranched pathway and is dispensable for fungal colonization of plants and infection of insect hosts. The first step of swainsonine biosynthesis is the production of the precursor pipecolic acid (PA) via conversion of L-lysine (Lys) to 1-piperideine-6-carboxylate (P6C) by the aminotransferase swnA, the latter being further reduced to PA by the reductase swnR. The PKS-NRPS hybrid synthetase swnK uptakes and condensates PA and malonyl-CoA with and without skipping of the ketoreductase (KR) domain in order to produce 3 intermediates, 1-oxoindolizidine, (1S)-1-hydroxyindolizin, and (1R)-1-hydroxyindolizine; with the transisomer (1S)-1-hydroxyindolizin being predominant. The terminal thioester reductase (TE) domain of swnK is involved in reduction of the thioester bond to release the intermediate aldehydes. The oxidoreductase swnN could contribute to the reduction of 1-oxoindolizidine to (1S)-1-hydroxyindolizin and (1R)-1-hydroxyindolizine, contributing to the major route of SW production. The dioxygenase swnH2 would be responsible for the oxidization of (1R)-1-hydroxyindolizine into (1R,2S)-1,2-dihydroxyindolizine and of (1S)-1-hydroxyindolizin to yield both (1R,2S)-1,2-dihydroxyindolizine and (1S,2S)-1,2-dihydroxyindolizine. The dioxygenase swnH1 then performs the conversion of the 1,2-dihydroxyindolizine epimers to SW. This is Oxidoreductase swnR from Arthroderma benhamiae (strain ATCC MYA-4681 / CBS 112371) (Trichophyton mentagrophytes).